A 218-amino-acid polypeptide reads, in one-letter code: Glutathione S-transferase D7 (218 aa).

The GST N-terminal domain maps to 1–82; it reads MTPVLYYLPP…YLVSAYGKDE (82 aa). Glutathione is bound by residues Ser11, 52-54, and 66-68; these read HCI and ESR. The GST C-terminal domain occupies 88 to 207; the sequence is DFRSRAIVDQ…KEINETGAET (120 aa).

The protein belongs to the GST superfamily. Theta family. In terms of assembly, homodimer.

The catalysed reaction is RX + glutathione = an S-substituted glutathione + a halide anion + H(+). In terms of biological role, conjugation of reduced glutathione to a wide number of exogenous and endogenous hydrophobic electrophiles. The sequence is that of Glutathione S-transferase D7 from Anopheles gambiae (African malaria mosquito).